The primary structure comprises 445 residues: Exodeoxyribonuclease 7 large subunit (445 aa).

It belongs to the XseA family. Heterooligomer composed of large and small subunits.

It is found in the cytoplasm. It carries out the reaction Exonucleolytic cleavage in either 5'- to 3'- or 3'- to 5'-direction to yield nucleoside 5'-phosphates.. Bidirectionally degrades single-stranded DNA into large acid-insoluble oligonucleotides, which are then degraded further into small acid-soluble oligonucleotides. This chain is Exodeoxyribonuclease 7 large subunit, found in Staphylococcus saprophyticus subsp. saprophyticus (strain ATCC 15305 / DSM 20229 / NCIMB 8711 / NCTC 7292 / S-41).